We begin with the raw amino-acid sequence, 242 residues long: Anti-Pycsar protein Apyc1 (242 aa).

The beta-lactamase-like stretch occupies residues 17–216; the sequence is FNNNALIEQD…EMQSIIKLMH (200 aa). The Zn(2+) site is built by histidine 59, histidine 61, aspartate 63, histidine 64, histidine 142, aspartate 162, and histidine 216.

Belongs to the anti-Pycsar protein Apyc1 family. Homodimer. Zn(2+) is required as a cofactor.

It catalyses the reaction 3',5'-cyclic CMP + H2O = CMP + H(+). It carries out the reaction 3',5'-cyclic UMP + H2O = UMP + H(+). Counteracts the endogenous Pycsar antiviral defense system. Phosphodiesterase that enables metal-dependent hydrolysis of host cyclic nucleotide Pycsar defense signals such as cCMP and cUMP. The protein is Anti-Pycsar protein Apyc1 of Saccharibacillus brassicae.